The primary structure comprises 378 residues: Ribosomal RNA large subunit methyltransferase G (378 aa).

It belongs to the methyltransferase superfamily. RlmG family.

The protein localises to the cytoplasm. It catalyses the reaction guanosine(1835) in 23S rRNA + S-adenosyl-L-methionine = N(2)-methylguanosine(1835) in 23S rRNA + S-adenosyl-L-homocysteine + H(+). Functionally, specifically methylates the guanine in position 1835 (m2G1835) of 23S rRNA. In Salmonella dublin (strain CT_02021853), this protein is Ribosomal RNA large subunit methyltransferase G.